Reading from the N-terminus, the 229-residue chain is Urease accessory protein UreF (229 aa).

Belongs to the UreF family. In terms of assembly, ureD, UreF and UreG form a complex that acts as a GTP-hydrolysis-dependent molecular chaperone, activating the urease apoprotein by helping to assemble the nickel containing metallocenter of UreC. The UreE protein probably delivers the nickel.

It is found in the cytoplasm. Required for maturation of urease via the functional incorporation of the urease nickel metallocenter. The polypeptide is Urease accessory protein UreF (Ralstonia pickettii (strain 12J)).